The sequence spans 520 residues: 2-isopropylmalate synthase (520 aa).

A Pyruvate carboxyltransferase domain is found at 12 to 274 (IRIFDTTLRD…DSAINTPRIV (263 aa)). Residues D21, H209, H211, and N245 each contribute to the Mn(2+) site. Residues 396-520 (RLASMTISDV…VIAGKTAAVA (125 aa)) are regulatory domain.

Belongs to the alpha-IPM synthase/homocitrate synthase family. LeuA type 1 subfamily. As to quaternary structure, homodimer. Requires Mn(2+) as cofactor.

The protein resides in the cytoplasm. It carries out the reaction 3-methyl-2-oxobutanoate + acetyl-CoA + H2O = (2S)-2-isopropylmalate + CoA + H(+). It participates in amino-acid biosynthesis; L-leucine biosynthesis; L-leucine from 3-methyl-2-oxobutanoate: step 1/4. Its function is as follows. Catalyzes the condensation of the acetyl group of acetyl-CoA with 3-methyl-2-oxobutanoate (2-ketoisovalerate) to form 3-carboxy-3-hydroxy-4-methylpentanoate (2-isopropylmalate). This is 2-isopropylmalate synthase from Xanthomonas oryzae pv. oryzae (strain KACC10331 / KXO85).